A 492-amino-acid polypeptide reads, in one-letter code: Trk system potassium uptake protein TrkI (492 aa).

Transmembrane regions (helical) follow at residues 20–40 (VLAV…LVLI), 47–67 (ALAF…SWIV), 81–101 (FVLT…PLVL), 143–163 (IMQW…LPFL), 196–216 (IYCG…MSPL), 246–266 (QLLW…VLYI), 282–302 (VQGL…WRVS), 334–354 (AWGA…GCSG), 403–423 (VVAF…GLSL), and 465–485 (WLLC…LVLL).

This sequence belongs to the TrkH potassium transport family.

It localises to the cell inner membrane. In terms of biological role, medium-affinity potassium transport system. Probably interacts with Trk system potassium uptake protein TrkA. Main K(+) transporter in osmotically adapted cells. The sequence is that of Trk system potassium uptake protein TrkI (trkI) from Halomonas elongata (strain ATCC 33173 / DSM 2581 / NBRC 15536 / NCIMB 2198 / 1H9).